We begin with the raw amino-acid sequence, 459 residues long: Argininosuccinate lyase (459 aa).

The protein belongs to the lyase 1 family. Argininosuccinate lyase subfamily.

It is found in the cytoplasm. The enzyme catalyses 2-(N(omega)-L-arginino)succinate = fumarate + L-arginine. It functions in the pathway amino-acid biosynthesis; L-arginine biosynthesis; L-arginine from L-ornithine and carbamoyl phosphate: step 3/3. This is Argininosuccinate lyase from Lactococcus lactis subsp. cremoris (strain SK11).